The sequence spans 434 residues: D-amino acid dehydrogenase (434 aa).

3–17 (VVILGSGVVGVASAW) contributes to the FAD binding site.

It belongs to the DadA oxidoreductase family. Requires FAD as cofactor.

It catalyses the reaction a D-alpha-amino acid + A + H2O = a 2-oxocarboxylate + AH2 + NH4(+). Its pathway is amino-acid degradation; D-alanine degradation; NH(3) and pyruvate from D-alanine: step 1/1. Its function is as follows. Oxidative deamination of D-amino acids. In Serratia proteamaculans (strain 568), this protein is D-amino acid dehydrogenase.